We begin with the raw amino-acid sequence, 562 residues long: Bifunctional coenzyme A synthase (562 aa).

Residues Ser177 and Ser182 each carry the phosphoserine modification. Residues Val179–Cys357 are phosphopantetheine adenylyltransferase. In terms of domain architecture, DPCK spans Val359–Pro562. Residue Gly364–Ser371 coordinates ATP.

The protein in the central section; belongs to the eukaryotic CoaD family. In terms of assembly, monomer. The N-terminus is blocked.

It is found in the cytoplasm. The protein localises to the mitochondrion matrix. It catalyses the reaction (R)-4'-phosphopantetheine + ATP + H(+) = 3'-dephospho-CoA + diphosphate. The enzyme catalyses 3'-dephospho-CoA + ATP = ADP + CoA + H(+). It participates in cofactor biosynthesis; coenzyme A biosynthesis; CoA from (R)-pantothenate: step 4/5. The protein operates within cofactor biosynthesis; coenzyme A biosynthesis; CoA from (R)-pantothenate: step 5/5. Bifunctional enzyme that catalyzes the fourth and fifth sequential steps of CoA biosynthetic pathway. The fourth reaction is catalyzed by the phosphopantetheine adenylyltransferase, coded by the coaD domain; the fifth reaction is catalyzed by the dephospho-CoA kinase, coded by the coaE domain. May act as a point of CoA biosynthesis regulation. The sequence is that of Bifunctional coenzyme A synthase from Sus scrofa (Pig).